Reading from the N-terminus, the 301-residue chain is Protoheme IX farnesyltransferase (301 aa).

Transmembrane regions (helical) follow at residues 16–36 (VVAL…PGMP), 41–61 (IQSG…AAAI), 93–113 (VFAG…VNLI), 114–134 (TAVL…VYLK), 141–161 (IVIG…AVTG), 172–192 (SLLV…LAIF), 217–237 (QILL…ATGM), 238–258 (SGVF…WYAW), and 273–293 (FGYS…DHWL).

The protein belongs to the UbiA prenyltransferase family. Protoheme IX farnesyltransferase subfamily.

Its subcellular location is the cell inner membrane. It catalyses the reaction heme b + (2E,6E)-farnesyl diphosphate + H2O = Fe(II)-heme o + diphosphate. It participates in porphyrin-containing compound metabolism; heme O biosynthesis; heme O from protoheme: step 1/1. Converts heme B (protoheme IX) to heme O by substitution of the vinyl group on carbon 2 of heme B porphyrin ring with a hydroxyethyl farnesyl side group. This chain is Protoheme IX farnesyltransferase, found in Xylella fastidiosa (strain Temecula1 / ATCC 700964).